The chain runs to 395 residues: Acid ceramidase (395 aa).

The N-terminal stretch at 1–21 is a signal peptide; it reads MPGRSRVALVLLAAAVSCAVA. The cysteines at positions 31 and 340 are disulfide-linked. Cys-143 acts as the Nucleophile in catalysis. N-linked (GlcNAc...) asparagine glycosylation is found at Asn-195, Asn-259, Asn-286, and Asn-342. Residues Cys-388 and Cys-392 are joined by a disulfide bond.

The protein belongs to the acid ceramidase family. Heterodimer; disulfide-linked. The heterodimer is composed of the disulfide-linked alpha and beta chains produced by autocatalytic cleavage of the precursor. In terms of processing, N-glycosylated. Proteolytically cleaved into two chains alpha and beta that remain associated via a disulfide bond. Cleavage gives rise to a conformation change that activates the enzyme. The same catalytic Cys residue mediates the autoproteolytic cleavage and subsequent hydrolysis of lipid substrates. The beta chain may undergo an additional C-terminal processing.

It localises to the lysosome. It is found in the secreted. The catalysed reaction is an N-acylsphing-4-enine + H2O = sphing-4-enine + a fatty acid. It catalyses the reaction N-dodecanoylsphing-4-enine + H2O = dodecanoate + sphing-4-enine. The enzyme catalyses N-tetradecanoylsphing-4-enine + H2O = tetradecanoate + sphing-4-enine. It carries out the reaction N-hexadecanoylsphing-4-enine + H2O = sphing-4-enine + hexadecanoate. The catalysed reaction is N-octadecanoylsphing-4-enine + H2O = sphing-4-enine + octadecanoate. It catalyses the reaction N-dodecanoyl-(4R)-hydroxysphinganine + H2O = (4R)-hydroxysphinganine + dodecanoate. The enzyme catalyses N-(dodecanoyl)-sphinganine + H2O = dodecanoate + sphinganine. It carries out the reaction N-(acetyl)-sphing-4-enine + H2O = sphing-4-enine + acetate. The catalysed reaction is N-(hexanoyl)sphing-4-enine + H2O = hexanoate + sphing-4-enine. It catalyses the reaction N-octanoylsphing-4-enine + H2O = octanoate + sphing-4-enine. The enzyme catalyses N-(9Z-octadecenoyl)-sphing-4-enine + H2O = sphing-4-enine + (9Z)-octadecenoate. It carries out the reaction N-dodecanoylethanolamine + H2O = dodecanoate + ethanolamine. The protein operates within lipid metabolism; sphingolipid metabolism. In terms of biological role, lysosomal ceramidase that hydrolyzes sphingolipid ceramides into sphingosine and free fatty acids at acidic pH. Ceramides, sphingosine, and its phosphorylated form sphingosine-1-phosphate are bioactive lipids that mediate cellular signaling pathways regulating several biological processes including cell proliferation, apoptosis and differentiation. Has a higher catalytic efficiency towards C12-ceramides versus other ceramides. Also catalyzes the reverse reaction allowing the synthesis of ceramides from fatty acids and sphingosine. For the reverse synthetic reaction, the natural sphingosine D-erythro isomer is more efficiently utilized as a substrate compared to D-erythro-dihydrosphingosine and D-erythro-phytosphingosine, while the fatty acids with chain lengths of 12 or 14 carbons are the most efficiently used. Also has an N-acylethanolamine hydrolase activity. By regulating the levels of ceramides, sphingosine and sphingosine-1-phosphate in the epidermis, mediates the calcium-induced differentiation of epidermal keratinocytes. Also indirectly regulates tumor necrosis factor/TNF-induced apoptosis. By regulating the intracellular balance between ceramides and sphingosine, in adrenocortical cells, probably also acts as a regulator of steroidogenesis. This is Acid ceramidase from Pan troglodytes (Chimpanzee).